The primary structure comprises 299 residues: Sugar transporter SWEET1 (299 aa).

One can recognise a MtN3/slv 1 domain in the interval 7-91; the sequence is QVLSISAITT…CVFFLIYSLP (85 aa). Helical transmembrane passes span 8 to 28, 36 to 56, 67 to 87, 95 to 115, 124 to 144, 155 to 175, and 180 to 200; these read VLSISAITTTIALFFCGIPIC, AVGDISGVPFLMGVLGGSFWL, MIIVNVVGVACMAFYCVFFLI, FTCQLILVTSTIGGMVLWIAL, VICMTFNIMNFGAPLAGLGVV, LPMCVANFLVSSQWCLYGNLV, and IIIPNGIGMFLAIVQLALFVV. One can recognise a MtN3/slv 2 domain in the interval 121-205; it reads YLGVICMTFN…ALFVVLPIRE (85 aa). Residues 230-299 form a disordered region; that stretch reads RGDCIVSSPP…DPDLSSIQSP (70 aa). The segment covering 247 to 261 has biased composition (basic and acidic residues); the sequence is NETRSDVEDKFDKLM. Residues 276–299 show a composition bias toward low complexity; the sequence is SMGSPPSYKSRSSSDPDLSSIQSP.

This sequence belongs to the SWEET sugar transporter family.

It localises to the golgi apparatus membrane. Its subcellular location is the cell membrane. In terms of biological role, mediates both low-affinity uptake and efflux of sugar across the membrane. This Caenorhabditis elegans protein is Sugar transporter SWEET1 (swt-1).